We begin with the raw amino-acid sequence, 426 residues long: Testicular acid phosphatase (426 aa).

The signal sequence occupies residues 1–26 (MAGLGFWGHPAGPLLLLLLLVLPPRA). At 27 to 393 (LPEGPLVFVA…AAIPPAPVVP (367 aa)) the chain is on the extracellular side. The active-site Nucleophile is histidine 41. Disulfide bonds link cysteine 159–cysteine 378, cysteine 214–cysteine 312, and cysteine 353–cysteine 357. Residues asparagine 191 and asparagine 269 are each glycosylated (N-linked (GlcNAc...) asparagine). Catalysis depends on aspartate 289, which acts as the Proton donor. N-linked (GlcNAc...) asparagine glycosylation is found at asparagine 330 and asparagine 339. A helical membrane pass occupies residues 394–414 (LLAGAVAVLVALSLGLGLLAW). Topologically, residues 415–426 (RPGCLRALGGPV) are cytoplasmic.

It belongs to the histidine acid phosphatase family. Homodimer. Post-translationally, glycosylated. In terms of tissue distribution, expressed mainly in the testis. Also expressed in the brain where they are enriched at the postsynaptic sites. Expressed at lower levels in the trachea, prostate, bone marrow, spinal cord, colon, fetal brain, heart, thymus, fetal liver, spleen, leukocytes, ovary, small intestine, pancreas and skeletal muscle. Expression is significantly lower in testicular cancer tissues than in normal testicular tissues. Isoform 3 is expressed in the testis, trachea, prostate and bone marrow.

It localises to the membrane. The catalysed reaction is a phosphate monoester + H2O = an alcohol + phosphate. Its function is as follows. May dephosphorylate receptor tyrosine-protein kinase ERBB4 and inhibits its ligand-induced proteolytic cleavage. May play a role in odontogenesis. The chain is Testicular acid phosphatase from Homo sapiens (Human).